The sequence spans 71 residues: Small ribosomal subunit protein bS21 (71 aa).

The disordered stretch occupies residues 47-71 (RENATRAKRHAKRVARENARNTRLY). Residues 60 to 71 (VARENARNTRLY) are compositionally biased toward basic and acidic residues.

It belongs to the bacterial ribosomal protein bS21 family.

The sequence is that of Small ribosomal subunit protein bS21 from Actinobacillus succinogenes (strain ATCC 55618 / DSM 22257 / CCUG 43843 / 130Z).